Reading from the N-terminus, the 232-residue chain is Peroxisomal protein PEX21 (232 aa).

A Glycyl cysteine thioester (Cys-Gly) (interchain with G-Cter in ubiquitin) cross-link involves residue C5.

It belongs to the peroxin-21 family. Interacts with PEX7. Monoubiquitinated at Cys-5; acts as a signal for PEX21 extraction and is required for proper export from peroxisomes and recycling.

The protein localises to the cytoplasm. The protein resides in the cytosol. Its subcellular location is the peroxisome. Mediates peroxisomal import of proteins containing a C-terminal PTS2-type peroxisomal targeting signal via its interaction with PEX7. Interaction with PEX7 only takes place when PEX7 is associated with cargo proteins containing a PTS2 peroxisomal targeting signal. PEX7 along with PTS2-containing cargo proteins are then translocated through the PEX13-PEX14 docking complex together with PEX21. The protein is Peroxisomal protein PEX21 (PEX21) of Candida glabrata (strain ATCC 2001 / BCRC 20586 / JCM 3761 / NBRC 0622 / NRRL Y-65 / CBS 138) (Yeast).